Consider the following 392-residue polypeptide: Integrin-linked kinase-associated serine/threonine phosphatase 2C (392 aa).

Met1 is subject to N-acetylmethionine. The disordered stretch occupies residues 1 to 90; that stretch reads MDLFGDLPEP…TSEEEKNGSE (90 aa). Ser13 is subject to Phosphoserine. Residues 56 to 70 are compositionally biased toward polar residues; that stretch reads SGDSGSLATSISQMV. The segment covering 72–90 has biased composition (basic and acidic residues); sequence TEGKGAKRKTSEEEKNGSE. In terms of domain architecture, PPM-type phosphatase spans 108-390; that stretch reads KGYVAERKGE…DNVTVMVVRI (283 aa). Mn(2+) is bound by residues Asp152 and Gly153. Lys210 is subject to N6-acetyllysine. Mn(2+) is bound by residues Asp326 and Asp381.

Belongs to the PP2C family. As to quaternary structure, interacts with ILK. Specific association with ILK is independent of the catalytic activity of either partner. Mg(2+) serves as cofactor. It depends on Mn(2+) as a cofactor. Widely expressed. Highest levels expressed in striated muscle. Much lower levels evident in various smooth muscle tissues.

It localises to the cytoplasm. The enzyme catalyses O-phospho-L-seryl-[protein] + H2O = L-seryl-[protein] + phosphate. The catalysed reaction is O-phospho-L-threonyl-[protein] + H2O = L-threonyl-[protein] + phosphate. Its activity is regulated as follows. Inhibited rather than stimulated by magnesium. In terms of biological role, protein phosphatase that may play a role in regulation of cell cycle progression via dephosphorylation of its substrates whose appropriate phosphorylation states might be crucial for cell proliferation. Selectively associates with integrin linked kinase (ILK), to modulate cell adhesion and growth factor signaling. Inhibits the ILK-GSK3B signaling axis and may play an important role in inhibiting oncogenic transformation. The polypeptide is Integrin-linked kinase-associated serine/threonine phosphatase 2C (ILKAP) (Homo sapiens (Human)).